Consider the following 430-residue polypeptide: Adenylosuccinate synthetase (430 aa).

Residues 12 to 18 and 40 to 42 each bind GTP; these read GDEGKGK and GHT. Residue Asp-13 is the Proton acceptor of the active site. Mg(2+) is bound by residues Asp-13 and Gly-40. Residues 13 to 16, 38 to 41, Thr-128, Arg-142, Gln-223, Thr-238, and Arg-302 contribute to the IMP site; these read DEGK and NAGH. Catalysis depends on His-41, which acts as the Proton donor. Residue 298 to 304 participates in substrate binding; that stretch reads TTTGRPR. Residues Arg-304, 330–332, and 412–414 each bind GTP; these read SID and SVG.

Belongs to the adenylosuccinate synthetase family. In terms of assembly, homodimer. Mg(2+) serves as cofactor.

The protein resides in the cytoplasm. The catalysed reaction is IMP + L-aspartate + GTP = N(6)-(1,2-dicarboxyethyl)-AMP + GDP + phosphate + 2 H(+). It functions in the pathway purine metabolism; AMP biosynthesis via de novo pathway; AMP from IMP: step 1/2. Functionally, plays an important role in the de novo pathway of purine nucleotide biosynthesis. Catalyzes the first committed step in the biosynthesis of AMP from IMP. This Streptococcus agalactiae serotype Ia (strain ATCC 27591 / A909 / CDC SS700) protein is Adenylosuccinate synthetase.